The primary structure comprises 129 residues: Glycine cleavage system H protein (129 aa).

The region spanning 24-106 (EAVVGITEHA…YGAGWLFRIK (83 aa)) is the Lipoyl-binding domain. An N6-lipoyllysine modification is found at Lys65.

The protein belongs to the GcvH family. As to quaternary structure, the glycine cleavage system is composed of four proteins: P, T, L and H. (R)-lipoate serves as cofactor.

The glycine cleavage system catalyzes the degradation of glycine. The H protein shuttles the methylamine group of glycine from the P protein to the T protein. The protein is Glycine cleavage system H protein of Aeromonas hydrophila subsp. hydrophila (strain ATCC 7966 / DSM 30187 / BCRC 13018 / CCUG 14551 / JCM 1027 / KCTC 2358 / NCIMB 9240 / NCTC 8049).